The primary structure comprises 265 residues: Anamorsin homolog 1 (265 aa).

Positions 1–143 (MAATVAEALA…KVSWSLGSSF (143 aa)) are N-terminal SAM-like domain. Positions 144–175 (PLKKATKGLPKIQIDDDSELIDEDSLLTEDDL) are linker. 4 residues coordinate [2Fe-2S] cluster: Cys-186, Cys-195, Cys-198, and Cys-200. Positions 186–200 (CEVGATRKACKNCTC) are fe-S binding site A. Residues Cys-226, Cys-229, Cys-237, and Cys-240 each coordinate [4Fe-4S] cluster. Short sequence motifs (cx2C motif) lie at residues 226–229 (CGNC) and 237–240 (CGTC). The fe-S binding site B stretch occupies residues 226 to 240 (CGNCGLGDAFRCGTC).

This sequence belongs to the anamorsin family. In terms of assembly, monomer. [2Fe-2S] cluster is required as a cofactor. Requires [4Fe-4S] cluster as cofactor.

It localises to the cytoplasm. The protein localises to the mitochondrion intermembrane space. Component of the cytosolic iron-sulfur (Fe-S) protein assembly (CIA) machinery. Required for the maturation of extramitochondrial Fe-S proteins. Part of an electron transfer chain functioning in an early step of cytosolic Fe-S biogenesis, facilitating the de novo assembly of a [4Fe-4S] cluster on the cytosolic Fe-S scaffold complex. Electrons are transferred from NADPH via a FAD- and FMN-containing diflavin oxidoreductase. Together with the diflavin oxidoreductase, also required for the assembly of the diferric tyrosyl radical cofactor of ribonucleotide reductase (RNR), probably by providing electrons for reduction during radical cofactor maturation in the catalytic small subunit. The protein is Anamorsin homolog 1 of Oryza sativa subsp. japonica (Rice).